The chain runs to 262 residues: MIHPTAQIHPTSIVEAGAKIGENVVIGPFCLVGAEVEIGAGTILHSHVVVKGITKIGRDNQIFQFASIGDTNQDLKYQGEPTRTIIGDRNRIRESVTIHRGTAQGGSVTVIGDDNLLMVNVHVAHDCRIKNRCILANNATLAGHVELDDFVIVGGMSAIHQFVIVGAHVMLGGGSMVSQDVPPYVMAQGNHAKPFGVNIEGLKRRGFDKPTLHAIRNVYKLIYRSGKTLEEVMPEIEQVAAKESAISFFVEFFKRSTRGIIR.

Belongs to the transferase hexapeptide repeat family. LpxA subfamily. Homotrimer.

It is found in the cytoplasm. The catalysed reaction is a (3R)-hydroxyacyl-[ACP] + UDP-N-acetyl-alpha-D-glucosamine = a UDP-3-O-[(3R)-3-hydroxyacyl]-N-acetyl-alpha-D-glucosamine + holo-[ACP]. It functions in the pathway glycolipid biosynthesis; lipid IV(A) biosynthesis; lipid IV(A) from (3R)-3-hydroxytetradecanoyl-[acyl-carrier-protein] and UDP-N-acetyl-alpha-D-glucosamine: step 1/6. In terms of biological role, involved in the biosynthesis of lipid A, a phosphorylated glycolipid that anchors the lipopolysaccharide to the outer membrane of the cell. The chain is Acyl-[acyl-carrier-protein]--UDP-N-acetylglucosamine O-acyltransferase from Pasteurella multocida (strain Pm70).